The following is a 116-amino-acid chain: Transcription elongation factor SPT4 homolog 1 (116 aa).

The C4-type zinc-finger motif lies at 19–39; sequence CLRCRLVKTYDQFRDSGCENC.

Belongs to the SPT4 family.

It is found in the nucleus. Functionally, may regulate transcription elongation by RNA polymerase II. May enhance transcriptional pausing at sites proximal to the promoter, which may in turn facilitate the assembly of an elongation competent RNA polymerase II complex. The polypeptide is Transcription elongation factor SPT4 homolog 1 (Arabidopsis thaliana (Mouse-ear cress)).